Consider the following 309-residue polypeptide: Hydroxyacylglutathione hydrolase, mitochondrial (309 aa).

Residues Met-1–Gly-24 constitute a mitochondrion transit peptide. Lys-90 bears the N6-acetyllysine mark. Zn(2+) is bound by residues His-103, His-105, Asp-107, and His-108. An N6-acetyllysine modification is found at Lys-117. 2 residues coordinate Zn(2+): His-159 and Asp-183. Residues Lys-192–Tyr-194 and His-222–Tyr-224 each bind substrate. His-222 provides a ligand contact to Zn(2+). An N6-acetyllysine; alternate modification is found at Lys-230. Lys-230 carries the N6-succinyllysine; alternate modification. Arg-298–Lys-301 is a substrate binding site.

It belongs to the metallo-beta-lactamase superfamily. Glyoxalase II family. Monomer. Zn(2+) serves as cofactor. In terms of tissue distribution, strongly expressed in testis, skeletal muscle and heart. Weakly expressed in placenta, pancreas, spleen and peripheral blood leukocytes.

The protein resides in the mitochondrion matrix. It localises to the cytoplasm. The catalysed reaction is an S-(2-hydroxyacyl)glutathione + H2O = a 2-hydroxy carboxylate + glutathione + H(+). It carries out the reaction (R)-S-lactoylglutathione + H2O = (R)-lactate + glutathione + H(+). The protein operates within secondary metabolite metabolism; methylglyoxal degradation; (R)-lactate from methylglyoxal: step 2/2. Thiolesterase that catalyzes the hydrolysis of S-D-lactoyl-glutathione to form glutathione and D-lactic acid. The chain is Hydroxyacylglutathione hydrolase, mitochondrial (Hagh) from Rattus norvegicus (Rat).